A 474-amino-acid chain; its full sequence is Protein CyaE (474 aa).

Residues 1 to 31 form the signal peptide; the sequence is MAAVQVRRRGRALALALWAGFALSVGGGVRA.

This sequence belongs to the outer membrane factor (OMF) (TC 1.B.17) family.

Its subcellular location is the cell outer membrane. In terms of biological role, cyaE is necessary for transport of calmodulin-sensitive adenylate cyclase-hemolysin (cyclolysin). The protein is Protein CyaE (cyaE) of Bordetella pertussis (strain Tohama I / ATCC BAA-589 / NCTC 13251).